Reading from the N-terminus, the 73-residue chain is UPF0154 protein MG335.1 (73 aa).

A helical membrane pass occupies residues 6-26; the sequence is LALGLGIPLSLLVGMILGYFI.

Belongs to the UPF0154 family.

The protein resides in the membrane. This chain is UPF0154 protein MG335.1, found in Mycoplasma genitalium (strain ATCC 33530 / DSM 19775 / NCTC 10195 / G37) (Mycoplasmoides genitalium).